We begin with the raw amino-acid sequence, 366 residues long: Homer protein homolog 1 (366 aa).

A WH1 domain is found at methionine 1–alanine 110. An N-acetylglycine modification is found at glycine 2. Positions lysine 114–serine 189 are disordered. A compositionally biased stretch (polar residues) spans serine 138–glycine 147. Positions lysine 193–glutamate 364 form a coiled coil. A required for tetramerization region spans residues lysine 302–serine 366. At serine 318 the chain carries Phosphoserine.

It belongs to the Homer family. Tetramer; this tetrameric structure is critical for forming the high-order complex with SHANK1, which in turn is necessary for the structural and functional integrity of dendritic spines. Interacts with GRM1, GRM5, ITPR1, DYN3, RYR1, RYR2 and SHANK3. Interacts with IFT57 and OPHN1. Isoform 1 and isoform 2 encode coiled-coil structures that mediate homo- and heteromultimerization. Interacts with SHANK1; forms high-order polymerized complex with a mesh-like network structure, at least composed of SHANK1, HOMER1 and DLGAP1; the complex formation is SHANK1 multimerization dependent. Interacts with NFATC4. Interacts with DAGLA (via PPXXF motif); this interaction is required for the cell membrane localization of DAGLA. Interacts with SRGAP2. In terms of tissue distribution, highly expressed in cortex, Purkinje cells of the cerebellum, hippocampus, striatum and olfactory bulb. Isoform 1 and isoform 3 are expressed in skeletal and cardiac muscle.

The protein resides in the cytoplasm. It localises to the postsynaptic density. Its subcellular location is the synapse. It is found in the cell projection. The protein localises to the dendritic spine. Postsynaptic density scaffolding protein. Binds and cross-links cytoplasmic regions of GRM1, GRM5, ITPR1, DNM3, RYR1, RYR2, SHANK1 and SHANK3. By physically linking GRM1 and GRM5 with ER-associated ITPR1 receptors, it aids the coupling of surface receptors to intracellular calcium release. May also couple GRM1 to PI3 kinase through its interaction with AGAP2. Differentially regulates the functions of the calcium activated channel ryanodine receptors RYR1 and RYR2. Isoform 1 decreases the activity of RYR2, and increases the activity of RYR1, whereas isoform 3 counteracts the effects by competing for binding sites. Isoform 1 regulates the trafficking and surface expression of GRM5. Isoform 3 acts as a natural dominant negative, in dynamic competition with constitutively expressed isoform 1, and isoform 2 to regulate synaptic metabotropic glutamate function. Isoform 3, may be involved in the structural changes that occur at synapses during long-lasting neuronal plasticity and development. Forms a high-order complex with SHANK1, which in turn is necessary for the structural and functional integrity of dendritic spines. Negatively regulates T cell activation by inhibiting the calcineurin-NFAT pathway. Acts by competing with calcineurin/PPP3CA for NFAT protein binding, hence preventing NFAT activation by PPP3CA. The sequence is that of Homer protein homolog 1 from Rattus norvegicus (Rat).